Here is a 363-residue protein sequence, read N- to C-terminus: Phosphatidylinositol transfer protein sfh-5 (363 aa).

The segment at 1–84 is disordered; that stretch reads MSTQPSDSAE…SPADIKDSVS (84 aa). Over residues 36 to 46 the composition is skewed to basic and acidic residues; sequence DAAKHAEEEPK. A compositionally biased stretch (low complexity) spans 64-76; the sequence is KPAAAPAQEADSP. Residues 180–354 enclose the CRAL-TRIO domain; sequence AGDEPAVDEP…EYGGKGADLK (175 aa). Heme-binding residues include Tyr-200, Arg-220, His-253, Tyr-255, and Lys-289.

It belongs to the SFH5 family. Heme b serves as cofactor.

Its subcellular location is the cytoplasm. The protein resides in the endoplasmic reticulum membrane. It is found in the microsome membrane. The catalysed reaction is a 1,2-diacyl-sn-glycero-3-phospho-(1D-myo-inositol)(in) = a 1,2-diacyl-sn-glycero-3-phospho-(1D-myo-inositol)(out). Functionally, non-classical phosphatidylinositol (PtdIns) transfer protein (PITP), which exhibits PtdIns-binding/transfer activity in the absence of detectable PtdCho-binding/transfer activity. Regulates PtdIns(4,5)P2 homeostasis at the plasma membrane. Heme-binding protein that may play a role in organic oxidant-induced stress responses. The chain is Phosphatidylinositol transfer protein sfh-5 (sfh-5) from Neurospora crassa (strain ATCC 24698 / 74-OR23-1A / CBS 708.71 / DSM 1257 / FGSC 987).